A 321-amino-acid polypeptide reads, in one-letter code: Ribose-phosphate pyrophosphokinase 2 (321 aa).

Residues D130, H132, and D145 each coordinate Mg(2+). A Phosphoserine modification is found at S172.

This sequence belongs to the ribose-phosphate pyrophosphokinase family.

Its subcellular location is the cytoplasm. It carries out the reaction D-ribose 5-phosphate + ATP = 5-phospho-alpha-D-ribose 1-diphosphate + AMP + H(+). Its pathway is metabolic intermediate biosynthesis; 5-phospho-alpha-D-ribose 1-diphosphate biosynthesis; 5-phospho-alpha-D-ribose 1-diphosphate from D-ribose 5-phosphate (route I): step 1/1. In terms of biological role, 5-phosphoribose 1-diphosphate synthase involved in nucleotide, histidine, and tryptophan biosynthesis. Active in heteromultimeric complexes with other 5-phosphoribose 1-diphosphate synthases. The polypeptide is Ribose-phosphate pyrophosphokinase 2 (Schizosaccharomyces pombe (strain 972 / ATCC 24843) (Fission yeast)).